Consider the following 227-residue polypeptide: NAD(P)H-quinone oxidoreductase subunit K, chloroplastic (227 aa).

Residues Cys43, Cys44, Cys108, and Cys139 each coordinate [4Fe-4S] cluster.

The protein belongs to the complex I 20 kDa subunit family. NDH is composed of at least 16 different subunits, 5 of which are encoded in the nucleus. [4Fe-4S] cluster serves as cofactor.

It is found in the plastid. Its subcellular location is the chloroplast thylakoid membrane. The catalysed reaction is a plastoquinone + NADH + (n+1) H(+)(in) = a plastoquinol + NAD(+) + n H(+)(out). It catalyses the reaction a plastoquinone + NADPH + (n+1) H(+)(in) = a plastoquinol + NADP(+) + n H(+)(out). NDH shuttles electrons from NAD(P)H:plastoquinone, via FMN and iron-sulfur (Fe-S) centers, to quinones in the photosynthetic chain and possibly in a chloroplast respiratory chain. The immediate electron acceptor for the enzyme in this species is believed to be plastoquinone. Couples the redox reaction to proton translocation, and thus conserves the redox energy in a proton gradient. In Drimys granadensis, this protein is NAD(P)H-quinone oxidoreductase subunit K, chloroplastic.